The following is a 248-amino-acid chain: MSFVVIIPARYASTRLPGKPLVDINGKPMIVHVLERARESGAARIIVATDHPDVARAIEAAGGEVCMTRADHQSGTERLAEVVEKCGFADDTVIVNVQGDEPMIPPAIIRQVAENLASAQAGMATLAVPVHDAQEAFNPNAVKVVMDAQGYALYFSRATIPWDRDRFAQSRDTIGDSFLRHIGIYGYRAGFIRRYVTWPASPLEQIEMLEQLRVLWHGEKIHVAVAAVVPGTGVDTPEDLERVRAEMR.

Belongs to the KdsB family.

The protein localises to the cytoplasm. It carries out the reaction 3-deoxy-alpha-D-manno-oct-2-ulosonate + CTP = CMP-3-deoxy-beta-D-manno-octulosonate + diphosphate. It participates in nucleotide-sugar biosynthesis; CMP-3-deoxy-D-manno-octulosonate biosynthesis; CMP-3-deoxy-D-manno-octulosonate from 3-deoxy-D-manno-octulosonate and CTP: step 1/1. The protein operates within bacterial outer membrane biogenesis; lipopolysaccharide biosynthesis. Activates KDO (a required 8-carbon sugar) for incorporation into bacterial lipopolysaccharide in Gram-negative bacteria. The chain is 3-deoxy-manno-octulosonate cytidylyltransferase from Cronobacter sakazakii (strain ATCC BAA-894) (Enterobacter sakazakii).